A 713-amino-acid chain; its full sequence is Polyribonucleotide nucleotidyltransferase (713 aa).

The Mg(2+) site is built by D487 and D493. One can recognise a KH domain in the interval 554–613 (PRIEVMNIPVDKIREVIGSGGKVIREIVEKTGAKINIEDDGTVKIASASGKEIEAARKWI). One can recognise an S1 motif domain in the interval 623–691 (GQIYEGTVVK…ERGKVRLSMK (69 aa)).

This sequence belongs to the polyribonucleotide nucleotidyltransferase family. Mg(2+) serves as cofactor.

It localises to the cytoplasm. It carries out the reaction RNA(n+1) + phosphate = RNA(n) + a ribonucleoside 5'-diphosphate. In terms of biological role, involved in mRNA degradation. Catalyzes the phosphorolysis of single-stranded polyribonucleotides processively in the 3'- to 5'-direction. The protein is Polyribonucleotide nucleotidyltransferase of Agrobacterium fabrum (strain C58 / ATCC 33970) (Agrobacterium tumefaciens (strain C58)).